Reading from the N-terminus, the 486-residue chain is N-succinylglutamate 5-semialdehyde dehydrogenase (486 aa).

Residue 220–225 (GSSRTG) participates in NAD(+) binding. Residues Glu-243 and Cys-277 contribute to the active site.

Belongs to the aldehyde dehydrogenase family. AstD subfamily.

It catalyses the reaction N-succinyl-L-glutamate 5-semialdehyde + NAD(+) + H2O = N-succinyl-L-glutamate + NADH + 2 H(+). It participates in amino-acid degradation; L-arginine degradation via AST pathway; L-glutamate and succinate from L-arginine: step 4/5. Catalyzes the NAD-dependent reduction of succinylglutamate semialdehyde into succinylglutamate. The protein is N-succinylglutamate 5-semialdehyde dehydrogenase of Shewanella baltica (strain OS155 / ATCC BAA-1091).